Reading from the N-terminus, the 126-residue chain is Aspartate 1-decarboxylase (126 aa).

Catalysis depends on Ser-25, which acts as the Schiff-base intermediate with substrate; via pyruvic acid. Ser-25 is modified (pyruvic acid (Ser)). Residue Thr-57 coordinates substrate. The active-site Proton donor is Tyr-58. Gly-73–Ala-75 contributes to the substrate binding site.

This sequence belongs to the PanD family. Heterooctamer of four alpha and four beta subunits. Pyruvate serves as cofactor. Is synthesized initially as an inactive proenzyme, which is activated by self-cleavage at a specific serine bond to produce a beta-subunit with a hydroxyl group at its C-terminus and an alpha-subunit with a pyruvoyl group at its N-terminus.

The protein localises to the cytoplasm. The enzyme catalyses L-aspartate + H(+) = beta-alanine + CO2. It participates in cofactor biosynthesis; (R)-pantothenate biosynthesis; beta-alanine from L-aspartate: step 1/1. Its function is as follows. Catalyzes the pyruvoyl-dependent decarboxylation of aspartate to produce beta-alanine. The chain is Aspartate 1-decarboxylase from Xylella fastidiosa (strain 9a5c).